We begin with the raw amino-acid sequence, 798 residues long: Elongation factor G, mitochondrial (798 aa).

The transit peptide at 1–24 directs the protein to the mitochondrion; the sequence is MRVIRAAAALNSSCAASSRQGARY. Positions 97–383 constitute a tr-type G domain; that stretch reads SMVRNIGIAA…AVCDYLPNPG (287 aa). GTP is bound by residues 106–113, 181–185, and 235–238; these read AHIDSGKT, DTPGH, and NKMD.

This sequence belongs to the TRAFAC class translation factor GTPase superfamily. Classic translation factor GTPase family. EF-G/EF-2 subfamily.

Its subcellular location is the mitochondrion. Its pathway is protein biosynthesis; polypeptide chain elongation. Mitochondrial GTPase that catalyzes the GTP-dependent ribosomal translocation step during translation elongation. During this step, the ribosome changes from the pre-translocational (PRE) to the post-translocational (POST) state as the newly formed A-site-bound peptidyl-tRNA and P-site-bound deacylated tRNA move to the P and E sites, respectively. Catalyzes the coordinated movement of the two tRNA molecules, the mRNA and conformational changes in the ribosome. In Chaetomium globosum (strain ATCC 6205 / CBS 148.51 / DSM 1962 / NBRC 6347 / NRRL 1970) (Soil fungus), this protein is Elongation factor G, mitochondrial.